Here is a 467-residue protein sequence, read N- to C-terminus: Glutamine synthetase (467 aa).

The 85-residue stretch at 11–95 (HDVKWIDLRF…IVCDIIEPST (85 aa)) folds into the GS beta-grasp domain. In terms of domain architecture, GS catalytic spans 103 to 467 (PRAIARRAEE…PLEYDLYYSV (365 aa)). Residues Glu128 and Glu130 each contribute to the Mg(2+) site. Glu206 serves as a coordination point for ATP. Residues Glu211 and Glu219 each coordinate Mg(2+). L-glutamate contacts are provided by residues 263 to 264 (NG) and Gly264. His268 is a Mg(2+) binding site. Residues 270 to 272 (HMS) and Ser272 contribute to the ATP site. Residues Arg320, Glu326, and Arg338 each contribute to the L-glutamate site. ATP contacts are provided by Arg338, Arg343, and Lys351. Glu356 contributes to the Mg(2+) binding site. Arg358 is an L-glutamate binding site. Residue Tyr396 is modified to O-AMP-tyrosine.

It belongs to the glutamine synthetase family. In terms of assembly, oligomer of 12 subunits arranged in the form of two hexameric ring. Mg(2+) serves as cofactor.

The protein resides in the cytoplasm. It carries out the reaction L-glutamate + NH4(+) + ATP = L-glutamine + ADP + phosphate + H(+). With respect to regulation, the activity of this enzyme could be controlled by adenylation under conditions of abundant glutamine. Functionally, catalyzes the ATP-dependent biosynthesis of glutamine from glutamate and ammonia. This is Glutamine synthetase from Azotobacter vinelandii.